Consider the following 394-residue polypeptide: Anhydro-N-acetylmuramic acid kinase (394 aa).

11-18 (GTSADGID) is an ATP binding site.

The protein belongs to the anhydro-N-acetylmuramic acid kinase family.

It catalyses the reaction 1,6-anhydro-N-acetyl-beta-muramate + ATP + H2O = N-acetyl-D-muramate 6-phosphate + ADP + H(+). Its pathway is amino-sugar metabolism; 1,6-anhydro-N-acetylmuramate degradation. The protein operates within cell wall biogenesis; peptidoglycan recycling. Catalyzes the specific phosphorylation of 1,6-anhydro-N-acetylmuramic acid (anhMurNAc) with the simultaneous cleavage of the 1,6-anhydro ring, generating MurNAc-6-P. Is required for the utilization of anhMurNAc either imported from the medium or derived from its own cell wall murein, and thus plays a role in cell wall recycling. This is Anhydro-N-acetylmuramic acid kinase from Deinococcus geothermalis (strain DSM 11300 / CIP 105573 / AG-3a).